A 363-amino-acid chain; its full sequence is tRNA dimethylallyltransferase (363 aa).

Glycine 65–serine 72 contacts ATP. Substrate is bound at residue threonine 67–serine 72. Interaction with substrate tRNA regions lie at residues aspartate 90 to glutamine 93 and glutamine 214 to arginine 218.

This sequence belongs to the IPP transferase family. As to quaternary structure, monomer. Mg(2+) serves as cofactor.

It catalyses the reaction adenosine(37) in tRNA + dimethylallyl diphosphate = N(6)-dimethylallyladenosine(37) in tRNA + diphosphate. Catalyzes the transfer of a dimethylallyl group onto the adenine at position 37 in tRNAs that read codons beginning with uridine, leading to the formation of N6-(dimethylallyl)adenosine (i(6)A). The protein is tRNA dimethylallyltransferase of Rickettsia rickettsii (strain Sheila Smith).